Reading from the N-terminus, the 131-residue chain is Small ribosomal subunit protein uS9 (131 aa).

Belongs to the universal ribosomal protein uS9 family.

This chain is Small ribosomal subunit protein uS9, found in Mesoplasma florum (strain ATCC 33453 / NBRC 100688 / NCTC 11704 / L1) (Acholeplasma florum).